A 170-amino-acid chain; its full sequence is MLPIITYPHPLLKKRSEPVTLFDEELRQFLDEMYITMLAKNGVGLAAVQVGNPIRALIVNIPDEEGNQERENLLEIINPEFLSKEGEIQFNEGCLSVPEFYEDVTRFDRVRLTYQDRYGERHEIEAEGYLAVALQHEIDHLNGILFIDKLSLIKRKKFEKELKKRQRASL.

Residues Cys-94 and His-136 each contribute to the Fe cation site. The active site involves Glu-137. His-140 contributes to the Fe cation binding site.

The protein belongs to the polypeptide deformylase family. The cofactor is Fe(2+).

It carries out the reaction N-terminal N-formyl-L-methionyl-[peptide] + H2O = N-terminal L-methionyl-[peptide] + formate. Its function is as follows. Removes the formyl group from the N-terminal Met of newly synthesized proteins. Requires at least a dipeptide for an efficient rate of reaction. N-terminal L-methionine is a prerequisite for activity but the enzyme has broad specificity at other positions. The polypeptide is Peptide deformylase (Wolinella succinogenes (strain ATCC 29543 / DSM 1740 / CCUG 13145 / JCM 31913 / LMG 7466 / NCTC 11488 / FDC 602W) (Vibrio succinogenes)).